We begin with the raw amino-acid sequence, 605 residues long: Elongation factor 4 (605 aa).

Residues 11–193 (KNIRNFSIIA…TLVDVIPAPT (183 aa)) enclose the tr-type G domain. Residues 23–28 (DHGKST) and 140–143 (NKID) contribute to the GTP site.

Belongs to the TRAFAC class translation factor GTPase superfamily. Classic translation factor GTPase family. LepA subfamily.

It is found in the cell inner membrane. The catalysed reaction is GTP + H2O = GDP + phosphate + H(+). Functionally, required for accurate and efficient protein synthesis under certain stress conditions. May act as a fidelity factor of the translation reaction, by catalyzing a one-codon backward translocation of tRNAs on improperly translocated ribosomes. Back-translocation proceeds from a post-translocation (POST) complex to a pre-translocation (PRE) complex, thus giving elongation factor G a second chance to translocate the tRNAs correctly. Binds to ribosomes in a GTP-dependent manner. This Acinetobacter baumannii (strain AB307-0294) protein is Elongation factor 4.